Reading from the N-terminus, the 203-residue chain is Outer-membrane lipoprotein carrier protein (203 aa).

The first 20 residues, 1-20 (MRRGRVWLAALCLAAGAAHA), serve as a signal peptide directing secretion.

The protein belongs to the LolA family. Monomer.

The protein resides in the periplasm. Participates in the translocation of lipoproteins from the inner membrane to the outer membrane. Only forms a complex with a lipoprotein if the residue after the N-terminal Cys is not an aspartate (The Asp acts as a targeting signal to indicate that the lipoprotein should stay in the inner membrane). The polypeptide is Outer-membrane lipoprotein carrier protein (Methylibium petroleiphilum (strain ATCC BAA-1232 / LMG 22953 / PM1)).